Consider the following 148-residue polypeptide: Cysteine-rich venom protein VAR6 (148 aa).

A signal peptide spans Met1–Ser22. One can recognise an SCP domain in the interval Asn41–Gln140.

The protein belongs to the CRISP family. Contains 8 disulfide bonds. In terms of tissue distribution, expressed by the venom gland.

It is found in the secreted. Blocks ryanodine receptors, and potassium channels. In Varanus acanthurus (Ridge-tailed monitor), this protein is Cysteine-rich venom protein VAR6.